Consider the following 256-residue polypeptide: Ras-related protein RabJ (256 aa).

A GTP-binding site is contributed by 16–23 (GSSDVGKT). The Effector region signature appears at 38–46 (LTSTIGASF). GTP contacts are provided by residues 64 to 68 (DSAGQ) and 122 to 125 (NKID). The disordered stretch occupies residues 229 to 256 (NGHLQGSINGHNNQNSTNYSDNSDQCCG). Polar residues predominate over residues 230-256 (GHLQGSINGHNNQNSTNYSDNSDQCCG). Residues cysteine 254 and cysteine 255 are each lipidated (S-geranylgeranyl cysteine).

This sequence belongs to the small GTPase superfamily. Rab family.

The protein localises to the cell membrane. In Dictyostelium discoideum (Social amoeba), this protein is Ras-related protein RabJ (rabJ).